The primary structure comprises 281 residues: sn-glycerol-3-phosphate transport system permease protein UgpE (281 aa).

Helical transmembrane passes span 16–36, 85–105, 113–133, 142–162, 202–222, and 247–267; these read LILGIAVILFPLYVAFVAATL, FSITLGKITVSMLSAFAIVWF, FFWMIFITLMLPVEVRIFPTV, LDSYAGLTLPLMASATATFLF, ALFVITFIYGWNQYLWPLLII, and WNSVMVAMLLTLIPPVVIVLV. An ABC transmembrane type-1 domain is found at 77–268; the sequence is LLNSFVMAFS…IPPVVIVLVM (192 aa).

This sequence belongs to the binding-protein-dependent transport system permease family. UgpAE subfamily. As to quaternary structure, the complex is composed of two ATP-binding proteins (UgpC), two transmembrane proteins (UgpA and UgpE) and a solute-binding protein (UgpB).

The protein resides in the cell inner membrane. Functionally, part of the ABC transporter complex UgpBAEC involved in sn-glycerol-3-phosphate (G3P) import. Probably responsible for the translocation of the substrate across the membrane. Can also transport glycerophosphoryl diesters, which are hydrolyzed to G3P and alcohol during transport. The G3P moiety can be detected in the cytoplasm whereas the corresponding alcohol is usually found in the culture medium. It was proposed by Yang et al that the complex could also transport glycerol-2-phosphate (G2P) in vivo, but it was shown later by Wuttge et al that UgpB does not bind G2P, questioning this transport activity. G2P might be converted in the periplasm to G3P before its transport. The protein is sn-glycerol-3-phosphate transport system permease protein UgpE of Escherichia coli (strain K12).